Reading from the N-terminus, the 487-residue chain is NADH-quinone oxidoreductase subunit N (487 aa).

A run of 14 helical transmembrane segments spans residues valine 16 to phenylalanine 36, leucine 45 to glycine 65, asparagine 79 to serine 99, glycine 111 to threonine 131, leucine 133 to phenylalanine 153, phenylalanine 168 to valine 188, leucine 212 to phenylalanine 232, alanine 257 to alanine 276, leucine 281 to leucine 298, methionine 306 to threonine 326, isoleucine 333 to leucine 353, alanine 378 to isoleucine 398, isoleucine 413 to valine 435, and leucine 457 to leucine 477.

It belongs to the complex I subunit 2 family. In terms of assembly, NDH-1 is composed of 14 different subunits. Subunits NuoA, H, J, K, L, M, N constitute the membrane sector of the complex.

Its subcellular location is the cell inner membrane. The enzyme catalyses a quinone + NADH + 5 H(+)(in) = a quinol + NAD(+) + 4 H(+)(out). Its function is as follows. NDH-1 shuttles electrons from NADH, via FMN and iron-sulfur (Fe-S) centers, to quinones in the respiratory chain. The immediate electron acceptor for the enzyme in this species is believed to be ubiquinone. Couples the redox reaction to proton translocation (for every two electrons transferred, four hydrogen ions are translocated across the cytoplasmic membrane), and thus conserves the redox energy in a proton gradient. The chain is NADH-quinone oxidoreductase subunit N from Trichlorobacter lovleyi (strain ATCC BAA-1151 / DSM 17278 / SZ) (Geobacter lovleyi).